Consider the following 607-residue polypeptide: Glutamine--fructose-6-phosphate aminotransferase [isomerizing] (607 aa).

Cysteine 2 (nucleophile; for GATase activity) is an active-site residue. Residues 2 to 217 form the Glutamine amidotransferase type-2 domain; it reads CGIIGIIGRE…EGDWVVLTRE (216 aa). SIS domains follow at residues 283 to 422 and 455 to 597; these read PDFD…VKGQ and VATA…VDQP. Catalysis depends on lysine 602, which acts as the For Fru-6P isomerization activity.

Homodimer.

The protein localises to the cytoplasm. The catalysed reaction is D-fructose 6-phosphate + L-glutamine = D-glucosamine 6-phosphate + L-glutamate. In terms of biological role, catalyzes the first step in hexosamine metabolism, converting fructose-6P into glucosamine-6P using glutamine as a nitrogen source. This is Glutamine--fructose-6-phosphate aminotransferase [isomerizing] from Zymomonas mobilis subsp. mobilis (strain ATCC 31821 / ZM4 / CP4).